The primary structure comprises 509 residues: Maturase K (509 aa).

Belongs to the intron maturase 2 family. MatK subfamily.

Its subcellular location is the plastid. The protein resides in the chloroplast. Functionally, usually encoded in the trnK tRNA gene intron. Probably assists in splicing its own and other chloroplast group II introns. The polypeptide is Maturase K (Avicennia marina (Grey mangrove)).